The primary structure comprises 388 residues: S-adenosylmethionine synthase (388 aa).

His16 contributes to the ATP binding site. Residue Asp18 coordinates Mg(2+). Glu44 contacts K(+). L-methionine contacts are provided by Glu57 and Gln100. Residues 100–110 form a flexible loop region; the sequence is QSPDIAQGVNE. Residues 167 to 169, 233 to 234, Asp242, 248 to 249, and Lys269 contribute to the ATP site; these read DGK, RF, and RK. Asp242 is an L-methionine binding site. Lys273 is a binding site for L-methionine.

The protein belongs to the AdoMet synthase family. Homotetramer; dimer of dimers. Mg(2+) serves as cofactor. K(+) is required as a cofactor.

The protein localises to the cytoplasm. The enzyme catalyses L-methionine + ATP + H2O = S-adenosyl-L-methionine + phosphate + diphosphate. It functions in the pathway amino-acid biosynthesis; S-adenosyl-L-methionine biosynthesis; S-adenosyl-L-methionine from L-methionine: step 1/1. In terms of biological role, catalyzes the formation of S-adenosylmethionine (AdoMet) from methionine and ATP. The overall synthetic reaction is composed of two sequential steps, AdoMet formation and the subsequent tripolyphosphate hydrolysis which occurs prior to release of AdoMet from the enzyme. The sequence is that of S-adenosylmethionine synthase from Desulfosudis oleivorans (strain DSM 6200 / JCM 39069 / Hxd3) (Desulfococcus oleovorans).